The following is a 193-amino-acid chain: Adenylate kinase (193 aa).

11-16 provides a ligand contact to ATP; the sequence is GSGKGT. The NMP stretch occupies residues 31 to 60; it reads STGDIFRANVKGETPLGLEAKKYMDAGDYV. AMP-binding positions include Thr32, Arg37, 58-60, 86-89, and Gln93; these read DYV and GYPR. The tract at residues 127-137 is LID; sequence GRAKESGRSDD. Arg128 provides a ligand contact to ATP. Positions 134 and 145 each coordinate AMP. Position 173 (Gly173) interacts with ATP.

Belongs to the adenylate kinase family. Monomer.

It localises to the cytoplasm. The enzyme catalyses AMP + ATP = 2 ADP. Its pathway is purine metabolism; AMP biosynthesis via salvage pathway; AMP from ADP: step 1/1. In terms of biological role, catalyzes the reversible transfer of the terminal phosphate group between ATP and AMP. Plays an important role in cellular energy homeostasis and in adenine nucleotide metabolism. The protein is Adenylate kinase of Renibacterium salmoninarum (strain ATCC 33209 / DSM 20767 / JCM 11484 / NBRC 15589 / NCIMB 2235).